Reading from the N-terminus, the 570-residue chain is Proline--tRNA ligase (570 aa).

Belongs to the class-II aminoacyl-tRNA synthetase family. ProS type 1 subfamily. As to quaternary structure, homodimer.

Its subcellular location is the cytoplasm. It catalyses the reaction tRNA(Pro) + L-proline + ATP = L-prolyl-tRNA(Pro) + AMP + diphosphate. Its function is as follows. Catalyzes the attachment of proline to tRNA(Pro) in a two-step reaction: proline is first activated by ATP to form Pro-AMP and then transferred to the acceptor end of tRNA(Pro). As ProRS can inadvertently accommodate and process non-cognate amino acids such as alanine and cysteine, to avoid such errors it has two additional distinct editing activities against alanine. One activity is designated as 'pretransfer' editing and involves the tRNA(Pro)-independent hydrolysis of activated Ala-AMP. The other activity is designated 'posttransfer' editing and involves deacylation of mischarged Ala-tRNA(Pro). The misacylated Cys-tRNA(Pro) is not edited by ProRS. The protein is Proline--tRNA ligase of Clostridium tetani (strain Massachusetts / E88).